Reading from the N-terminus, the 799-residue chain is Disintegrin and metalloproteinase domain-containing protein B (799 aa).

The signal sequence occupies residues 1–23 (MKAFSCLLSVIATAASLFQHVDA). Residues 24-707 (RSHARDKLNN…VSDWVSRHKP (684 aa)) are Extracellular-facing. N-linked (GlcNAc...) asparagine glycosylation is found at Asn33, Asn227, Asn228, Asn314, and Asn408. A Peptidase M12B domain is found at 272 to 511 (KVALIGVVAD…RTILTSCLTT (240 aa)). Cystine bridges form between Cys396–Cys496, Cys449–Cys460, and Cys581–Cys601. Residue His432 participates in Zn(2+) binding. Residue Glu433 is part of the active site. The Zn(2+) site is built by His436 and His442. One can recognise a Disintegrin domain in the interval 520–609 (GQQCGNGIVE…DCPHDIHSKD (90 aa)). A helical membrane pass occupies residues 708–728 (IVIGVAVGAGCLLLLAIASCI). Topologically, residues 729–799 (CGRSRRQRPR…PGHLPSTRYA (71 aa)) are cytoplasmic. The tract at residues 753–799 (VYNGWNGAPPNAQQSSPGGHPPYNNIPPPINAPPPAYPGHLPSTRYA) is disordered. Positions 776-789 (NNIPPPINAPPPAY) are enriched in pro residues.

It depends on Zn(2+) as a cofactor.

The protein localises to the membrane. In terms of biological role, probable zinc protease. This is Disintegrin and metalloproteinase domain-containing protein B (ADM-B) from Arthroderma benhamiae (strain ATCC MYA-4681 / CBS 112371) (Trichophyton mentagrophytes).